Here is a 25-residue protein sequence, read N- to C-terminus: Putative cytochrome c4 (25 aa).

A disordered region spans residues 1–25; the sequence is QEDIEAGKQKSATCTACHGQEGNST. Heme-binding residues include Cys-14 and Cys-17.

Post-translationally, binds 2 heme groups per subunit.

The protein resides in the periplasm. Diheme, high potential cytochrome c believed to be an intermediate electron donor to terminal oxidation systems. The polypeptide is Putative cytochrome c4 (Aliivibrio fischeri (Vibrio fischeri)).